We begin with the raw amino-acid sequence, 559 residues long: 5'-AMP-activated protein kinase catalytic subunit alpha-1 (559 aa).

A Protein kinase domain is found at 27–279; sequence YILGDTLGVG…IKDIREHEWF (253 aa). Residue Thr32 is modified to Phosphothreonine. Residues 33–41 and Lys56 each bind ATP; that span reads LGVGTFGKV. Asp150 (proton acceptor) is an active-site residue. Thr183 is modified (phosphothreonine; by LKB1 and CaMKK2). A phosphothreonine mark is found at Thr269 and Thr355. Positions 302–381 are AIS; that stretch reads EALKEVCEKF…PERVPFLVAE (80 aa). Ser356 carries the post-translational modification Phosphoserine. A Phosphoserine; by ULK1 modification is found at Ser360. Thr368 carries the phosphothreonine; by ULK1 modification. Thr382 carries the phosphothreonine modification. Phosphoserine is present on residues Ser397, Ser467, and Ser486. Positions 485-505 are enriched in polar residues; that stretch reads KSGTATPQRSGSVSNYRSCQR. Positions 485–536 are disordered; sequence KSGTATPQRSGSVSNYRSCQRSDSDAEAQGKSSEVSLTSSVTSLDSSPVDLT. Phosphothreonine is present on residues Thr488 and Thr490. Phosphoserine is present on residues Ser496, Ser508, Ser524, and Ser527. Positions 516–535 are enriched in low complexity; that stretch reads SSEVSLTSSVTSLDSSPVDL.

Belongs to the protein kinase superfamily. CAMK Ser/Thr protein kinase family. SNF1 subfamily. As to quaternary structure, AMPK is a heterotrimer of an alpha catalytic subunit (PRKAA1 or PRKAA2), a beta (PRKAB1 or PRKAB2) and a gamma non-catalytic subunits (PRKAG1, PRKAG2 or PRKAG3). Interacts with FNIP1 and FNIP2. (Microbial infection) Interacts with Dengue type 2 virus non-structural protein 1; this interaction promotes the AMPK/ERK/mTOR signaling pathway to induce autophagy. It depends on Mg(2+) as a cofactor. Ubiquitinated. In terms of processing, phosphorylated at Thr-183 by STK11/LKB1 in complex with STE20-related adapter-alpha (STRADA) pseudo kinase and CAB39. Also phosphorylated at Thr-183 by CAMKK2; triggered by a rise in intracellular calcium ions, without detectable changes in the AMP/ATP ratio. CAMKK1 can also phosphorylate Thr-183, but at a much lower level. Dephosphorylated by protein phosphatase 2A and 2C (PP2A and PP2C). Phosphorylated by ULK1 and ULK2; leading to negatively regulate AMPK activity and suggesting the existence of a regulatory feedback loop between ULK1, ULK2 and AMPK. Dephosphorylated by PPM1A and PPM1B. Post-translationally, glycosylated; O-GlcNAcylated by OGT, promoting the AMP-activated protein kinase (AMPK) activity.

It localises to the cytoplasm. Its subcellular location is the nucleus. The enzyme catalyses L-seryl-[protein] + ATP = O-phospho-L-seryl-[protein] + ADP + H(+). It carries out the reaction L-threonyl-[protein] + ATP = O-phospho-L-threonyl-[protein] + ADP + H(+). It catalyses the reaction L-seryl-[acetyl-CoA carboxylase] + ATP = O-phospho-L-seryl-[acetyl-CoA carboxylase] + ADP + H(+). The catalysed reaction is L-seryl-[3-hydroxy-3-methylglutaryl-coenzyme A reductase] + ATP = O-phospho-L-seryl-[3-hydroxy-3-methylglutaryl-coenzyme A reductase] + ADP + H(+). The enzyme catalyses L-seryl-[tau protein] + ATP = O-phospho-L-seryl-[tau protein] + ADP + H(+). It carries out the reaction L-threonyl-[tau protein] + ATP = O-phospho-L-threonyl-[tau protein] + ADP + H(+). With respect to regulation, activated by phosphorylation on Thr-183. Binding of AMP to non-catalytic gamma subunit (PRKAG1, PRKAG2 or PRKAG3) results in allosteric activation, inducing phosphorylation on Thr-183. AMP-binding to gamma subunit also sustains activity by preventing dephosphorylation of Thr-183. ADP also stimulates Thr-183 phosphorylation, without stimulating already phosphorylated AMPK. ATP promotes dephosphorylation of Thr-183, rendering the enzyme inactive. Under physiological conditions AMPK mainly exists in its inactive form in complex with ATP, which is much more abundant than AMP. AMPK is activated by antihyperglycemic drug metformin, a drug prescribed to patients with type 2 diabetes: in vivo, metformin seems to mainly inhibit liver gluconeogenesis. However, metformin can be used to activate AMPK in muscle and other cells in culture or ex vivo. Selectively inhibited by compound C (6-[4-(2-Piperidin-1-yl-ethoxy)-phenyl)]-3-pyridin-4-yl-pyyrazolo[1,5-a] pyrimidine. Activated by resveratrol, a natural polyphenol present in red wine, and S17834, a synthetic polyphenol. Its function is as follows. Catalytic subunit of AMP-activated protein kinase (AMPK), an energy sensor protein kinase that plays a key role in regulating cellular energy metabolism. In response to reduction of intracellular ATP levels, AMPK activates energy-producing pathways and inhibits energy-consuming processes: inhibits protein, carbohydrate and lipid biosynthesis, as well as cell growth and proliferation. AMPK acts via direct phosphorylation of metabolic enzymes, and by longer-term effects via phosphorylation of transcription regulators. Regulates lipid synthesis by phosphorylating and inactivating lipid metabolic enzymes such as ACACA, ACACB, GYS1, HMGCR and LIPE; regulates fatty acid and cholesterol synthesis by phosphorylating acetyl-CoA carboxylase (ACACA and ACACB) and hormone-sensitive lipase (LIPE) enzymes, respectively. Promotes lipolysis of lipid droplets by mediating phosphorylation of isoform 1 of CHKA (CHKalpha2). Regulates insulin-signaling and glycolysis by phosphorylating IRS1, PFKFB2 and PFKFB3. AMPK stimulates glucose uptake in muscle by increasing the translocation of the glucose transporter SLC2A4/GLUT4 to the plasma membrane, possibly by mediating phosphorylation of TBC1D4/AS160. Regulates transcription and chromatin structure by phosphorylating transcription regulators involved in energy metabolism such as CRTC2/TORC2, FOXO3, histone H2B, HDAC5, MEF2C, MLXIPL/ChREBP, EP300, HNF4A, p53/TP53, SREBF1, SREBF2 and PPARGC1A. Acts as a key regulator of glucose homeostasis in liver by phosphorylating CRTC2/TORC2, leading to CRTC2/TORC2 sequestration in the cytoplasm. In response to stress, phosphorylates 'Ser-36' of histone H2B (H2BS36ph), leading to promote transcription. Acts as a key regulator of cell growth and proliferation by phosphorylating FNIP1, TSC2, RPTOR, WDR24 and ATG1/ULK1: in response to nutrient limitation, negatively regulates the mTORC1 complex by phosphorylating RPTOR component of the mTORC1 complex and by phosphorylating and activating TSC2. Also phosphorylates and inhibits GATOR2 subunit WDR24 in response to nutrient limitation, leading to suppress glucose-mediated mTORC1 activation. In response to energetic stress, phosphorylates FNIP1, inactivating the non-canonical mTORC1 signaling, thereby promoting nuclear translocation of TFEB and TFE3, and inducing transcription of lysosomal or autophagy genes. In response to nutrient limitation, promotes autophagy by phosphorylating and activating ATG1/ULK1. In that process, it also activates WDR45/WIPI4. Phosphorylates CASP6, thereby preventing its autoprocessing and subsequent activation. In response to nutrient limitation, phosphorylates transcription factor FOXO3 promoting FOXO3 mitochondrial import. Also acts as a regulator of cellular polarity by remodeling the actin cytoskeleton; probably by indirectly activating myosin. AMPK also acts as a regulator of circadian rhythm by mediating phosphorylation of CRY1, leading to destabilize it. May regulate the Wnt signaling pathway by phosphorylating CTNNB1, leading to stabilize it. Also has tau-protein kinase activity: in response to amyloid beta A4 protein (APP) exposure, activated by CAMKK2, leading to phosphorylation of MAPT/TAU; however the relevance of such data remains unclear in vivo. Also phosphorylates CFTR, EEF2K, KLC1, NOS3 and SLC12A1. Regulates hepatic lipogenesis. Activated via SIRT3, represses sterol regulatory element-binding protein (SREBP) transcriptional activities and ATP-consuming lipogenesis to restore cellular energy balance. Upon stress, regulates mitochondrial fragmentation through phosphorylation of MTFR1L. This is 5'-AMP-activated protein kinase catalytic subunit alpha-1 from Homo sapiens (Human).